The following is a 340-amino-acid chain: Phosphoribosylformylglycinamidine cyclo-ligase (340 aa).

The protein belongs to the AIR synthase family.

Its subcellular location is the cytoplasm. It catalyses the reaction 2-formamido-N(1)-(5-O-phospho-beta-D-ribosyl)acetamidine + ATP = 5-amino-1-(5-phospho-beta-D-ribosyl)imidazole + ADP + phosphate + H(+). It functions in the pathway purine metabolism; IMP biosynthesis via de novo pathway; 5-amino-1-(5-phospho-D-ribosyl)imidazole from N(2)-formyl-N(1)-(5-phospho-D-ribosyl)glycinamide: step 2/2. This Streptococcus pneumoniae (strain Taiwan19F-14) protein is Phosphoribosylformylglycinamidine cyclo-ligase.